A 235-amino-acid chain; its full sequence is 1-(5-phosphoribosyl)-5-[(5-phosphoribosylamino)methylideneamino] imidazole-4-carboxamide isomerase (235 aa).

The active-site Proton acceptor is the aspartate 8. Aspartate 128 functions as the Proton donor in the catalytic mechanism.

It belongs to the HisA/HisF family.

The protein localises to the cytoplasm. The catalysed reaction is 1-(5-phospho-beta-D-ribosyl)-5-[(5-phospho-beta-D-ribosylamino)methylideneamino]imidazole-4-carboxamide = 5-[(5-phospho-1-deoxy-D-ribulos-1-ylimino)methylamino]-1-(5-phospho-beta-D-ribosyl)imidazole-4-carboxamide. Its pathway is amino-acid biosynthesis; L-histidine biosynthesis; L-histidine from 5-phospho-alpha-D-ribose 1-diphosphate: step 4/9. The polypeptide is 1-(5-phosphoribosyl)-5-[(5-phosphoribosylamino)methylideneamino] imidazole-4-carboxamide isomerase (Thermus thermophilus (strain ATCC 27634 / DSM 579 / HB8)).